A 146-amino-acid chain; its full sequence is UPF0178 protein Helmi_09130 (146 aa).

It belongs to the UPF0178 family.

This is UPF0178 protein Helmi_09130 from Heliobacterium modesticaldum (strain ATCC 51547 / Ice1).